The sequence spans 233 residues: Aspartate/glutamate leucyltransferase (233 aa).

The protein belongs to the R-transferase family. Bpt subfamily.

The protein resides in the cytoplasm. It catalyses the reaction N-terminal L-glutamyl-[protein] + L-leucyl-tRNA(Leu) = N-terminal L-leucyl-L-glutamyl-[protein] + tRNA(Leu) + H(+). It carries out the reaction N-terminal L-aspartyl-[protein] + L-leucyl-tRNA(Leu) = N-terminal L-leucyl-L-aspartyl-[protein] + tRNA(Leu) + H(+). Functionally, functions in the N-end rule pathway of protein degradation where it conjugates Leu from its aminoacyl-tRNA to the N-termini of proteins containing an N-terminal aspartate or glutamate. The chain is Aspartate/glutamate leucyltransferase from Vibrio cholerae serotype O1 (strain ATCC 39315 / El Tor Inaba N16961).